Consider the following 130-residue polypeptide: Large ribosomal subunit protein eL32 (130 aa).

Residue S40 is modified to Phosphoserine.

Belongs to the eukaryotic ribosomal protein eL32 family. Component of the large ribosomal subunit (LSU). Mature yeast ribosomes consist of a small (40S) and a large (60S) subunit. The 40S small subunit contains 1 molecule of ribosomal RNA (18S rRNA) and 33 different proteins (encoded by 57 genes). The large 60S subunit contains 3 rRNA molecules (25S, 5.8S and 5S rRNA) and 46 different proteins (encoded by 81 genes).

The protein resides in the cytoplasm. Component of the ribosome, a large ribonucleoprotein complex responsible for the synthesis of proteins in the cell. The small ribosomal subunit (SSU) binds messenger RNAs (mRNAs) and translates the encoded message by selecting cognate aminoacyl-transfer RNA (tRNA) molecules. The large subunit (LSU) contains the ribosomal catalytic site termed the peptidyl transferase center (PTC), which catalyzes the formation of peptide bonds, thereby polymerizing the amino acids delivered by tRNAs into a polypeptide chain. The nascent polypeptides leave the ribosome through a tunnel in the LSU and interact with protein factors that function in enzymatic processing, targeting, and the membrane insertion of nascent chains at the exit of the ribosomal tunnel. In Saccharomyces cerevisiae (strain ATCC 204508 / S288c) (Baker's yeast), this protein is Large ribosomal subunit protein eL32.